Reading from the N-terminus, the 174-residue chain is Protein GrpE (174 aa).

The tract at residues 1 to 35 is disordered; it reads MAQDIKNEEVEEVQEEEVVKTAEETTPEKSELDLA. Positions 17–35 are enriched in basic and acidic residues; the sequence is EVVKTAEETTPEKSELDLA.

It belongs to the GrpE family. As to quaternary structure, homodimer.

The protein resides in the cytoplasm. Functionally, participates actively in the response to hyperosmotic and heat shock by preventing the aggregation of stress-denatured proteins, in association with DnaK and GrpE. It is the nucleotide exchange factor for DnaK and may function as a thermosensor. Unfolded proteins bind initially to DnaJ; upon interaction with the DnaJ-bound protein, DnaK hydrolyzes its bound ATP, resulting in the formation of a stable complex. GrpE releases ADP from DnaK; ATP binding to DnaK triggers the release of the substrate protein, thus completing the reaction cycle. Several rounds of ATP-dependent interactions between DnaJ, DnaK and GrpE are required for fully efficient folding. The chain is Protein GrpE from Streptococcus pneumoniae serotype 4 (strain ATCC BAA-334 / TIGR4).